A 531-amino-acid chain; its full sequence is Polygalacturonase (531 aa).

The signal sequence occupies residues 1–23 (MILSHRYTLIALAAAILSSGAHA). D307 functions as the Proton donor in the catalytic mechanism. H333 is an active-site residue. The required for PGA export across the outer membrane and catalytic activity stretch occupies residues 518–531 (AFVPLKSVAPTSPI).

The protein belongs to the glycosyl hydrolase 28 family. As to quaternary structure, monomer.

The protein resides in the secreted. The catalysed reaction is (1,4-alpha-D-galacturonosyl)n+m + H2O = (1,4-alpha-D-galacturonosyl)n + (1,4-alpha-D-galacturonosyl)m.. In terms of biological role, contributes to the wilt disease production on tomato. The sequence is that of Polygalacturonase (pglA) from Ralstonia nicotianae (strain ATCC BAA-1114 / GMI1000) (Ralstonia solanacearum).